A 1077-amino-acid chain; its full sequence is Eukaryotic translation initiation factor 2-alpha kinase pek-1 (1077 aa).

The N-terminal stretch at 1-23 (MSVYYIVLAGFLLFMALVPFNAG) is a signal peptide. At 24-453 (QQYIDDDIEV…ITLMQTIFSY (430 aa)) the chain is on the lumenal side. Residue Asn206 is glycosylated (N-linked (GlcNAc...) asparagine). The helical transmembrane segment at 454–474 (IFNPTAVVSFLAGLIGVTVAV) threads the bilayer. The Cytoplasmic segment spans residues 475-1077 (VYNKIAKSSP…HEVATHKFLQ (603 aa)). One can recognise a Protein kinase domain in the interval 604–1076 (FEVKKVIGHG…AHEVATHKFL (473 aa)). ATP is bound by residues 610 to 618 (IGHGGFGVV) and Lys633. Residues 727-834 (MPPVVGNTTD…FVDGSDDVDN (108 aa)) form a disordered region. Positions 732-746 (GNTTDAENSWSTSAK) are enriched in polar residues. Basic and acidic residues predominate over residues 766 to 778 (GSDRTTAELKEES). The segment covering 783-796 (ESDEESDTTEDSSS) has biased composition (acidic residues). Residues 797 to 808 (SDESPSSSSGSS) are compositionally biased toward low complexity. Asp933 acts as the Proton acceptor in catalysis.

This sequence belongs to the protein kinase superfamily. Ser/Thr protein kinase family. GCN2 subfamily. Forms dimers with HSPA5/BIP in resting cells. Oligomerizes in ER-stressed cells. Autophosphorylated. In terms of processing, N-glycosylated. In terms of tissue distribution, expressed in intestinal cells.

Its subcellular location is the endoplasmic reticulum membrane. It catalyses the reaction L-seryl-[protein] + ATP = O-phospho-L-seryl-[protein] + ADP + H(+). The catalysed reaction is L-threonyl-[protein] + ATP = O-phospho-L-threonyl-[protein] + ADP + H(+). Perturbation in protein folding in the endoplasmic reticulum (ER) promotes reversible dissociation from HSPA5/BIP and oligomerization, resulting in transautophosphorylation and kinase activity induction. Phosphorylates the alpha subunit of eukaryotic translation-initiation factor 2 (eIF2alpha), leading to its inactivation and thus to a rapid reduction of translational initiation and repression of global protein synthesis. May phosphorylate eIF2alpha during hypoxia. Proposed to have a role in alleviating endoplasmic reticulum stress. The polypeptide is Eukaryotic translation initiation factor 2-alpha kinase pek-1 (pek-1) (Caenorhabditis elegans).